Consider the following 144-residue polypeptide: AP-4 complex subunit sigma-1 (144 aa).

It belongs to the adaptor complexes small subunit family. Adaptor protein complex 4 (AP-4) is a heterotetramer composed of two large adaptins (epsilon-type subunit AP4E1 and beta-type subunit AP4B1), a medium adaptin (mu-type subunit AP4M1) and a small adaptin (sigma-type AP4S1). Widely expressed.

The protein localises to the golgi apparatus. It localises to the trans-Golgi network membrane. Functionally, component of the adaptor protein complex 4 (AP-4). Adaptor protein complexes are vesicle coat components involved both in vesicle formation and cargo selection. They control the vesicular transport of proteins in different trafficking pathways. AP-4 forms a non clathrin-associated coat on vesicles departing the trans-Golgi network (TGN) and may be involved in the targeting of proteins from the trans-Golgi network (TGN) to the endosomal-lysosomal system. It is also involved in protein sorting to the basolateral membrane in epithelial cells and the proper asymmetric localization of somatodendritic proteins in neurons. AP-4 is involved in the recognition and binding of tyrosine-based sorting signals found in the cytoplasmic part of cargos, but may also recognize other types of sorting signal. In Homo sapiens (Human), this protein is AP-4 complex subunit sigma-1.